The sequence spans 123 residues: Small ribosomal subunit protein uS11 (123 aa).

Belongs to the universal ribosomal protein uS11 family. Part of the 30S ribosomal subunit. Interacts with proteins S7 and S18. Binds to IF-3.

In terms of biological role, located on the platform of the 30S subunit, it bridges several disparate RNA helices of the 16S rRNA. Forms part of the Shine-Dalgarno cleft in the 70S ribosome. The polypeptide is Small ribosomal subunit protein uS11 (Coxiella burnetii (strain CbuK_Q154) (Coxiella burnetii (strain Q154))).